Reading from the N-terminus, the 156-residue chain is E3 ubiquitin-protein ligase RNF181 (156 aa).

The RING-type; atypical zinc-finger motif lies at 79–120 (CPVCLLEFEEQESVREMPCKHLFHTGCILPWLNKTNSCPLCR). The disordered stretch occupies residues 135 to 156 (KDKERRRQREHRLEDLHGAMYT).

It belongs to the RNF181 family.

It catalyses the reaction S-ubiquitinyl-[E2 ubiquitin-conjugating enzyme]-L-cysteine + [acceptor protein]-L-lysine = [E2 ubiquitin-conjugating enzyme]-L-cysteine + N(6)-ubiquitinyl-[acceptor protein]-L-lysine.. The protein operates within protein modification; protein ubiquitination. In terms of biological role, E3 ubiquitin-protein ligase which accepts ubiquitin from an E2 ubiquitin-conjugating enzyme in the form of a thioester and then directly transfers the ubiquitin to targeted substrates. Catalyzes monoubiquitination of 26S proteasome subunit PSMC2/RPT1. In Danio rerio (Zebrafish), this protein is E3 ubiquitin-protein ligase RNF181 (rnf181).